We begin with the raw amino-acid sequence, 352 residues long: Phosphoribosylformylglycinamidine cyclo-ligase (352 aa).

Belongs to the AIR synthase family.

The protein resides in the cytoplasm. The enzyme catalyses 2-formamido-N(1)-(5-O-phospho-beta-D-ribosyl)acetamidine + ATP = 5-amino-1-(5-phospho-beta-D-ribosyl)imidazole + ADP + phosphate + H(+). It functions in the pathway purine metabolism; IMP biosynthesis via de novo pathway; 5-amino-1-(5-phospho-D-ribosyl)imidazole from N(2)-formyl-N(1)-(5-phospho-D-ribosyl)glycinamide: step 2/2. The sequence is that of Phosphoribosylformylglycinamidine cyclo-ligase from Nitrosospira multiformis (strain ATCC 25196 / NCIMB 11849 / C 71).